The chain runs to 957 residues: Bifunctional glutamine synthetase adenylyltransferase/adenylyl-removing enzyme (957 aa).

Positions 1 to 449 (MTQHLERPEL…VFDDIIGTDE (449 aa)) are adenylyl removase. The segment at 457 to 957 (SEQYNEMWTM…QEYLVPSSDE (501 aa)) is adenylyl transferase.

This sequence belongs to the GlnE family. Mg(2+) serves as cofactor.

The catalysed reaction is [glutamine synthetase]-O(4)-(5'-adenylyl)-L-tyrosine + phosphate = [glutamine synthetase]-L-tyrosine + ADP. It carries out the reaction [glutamine synthetase]-L-tyrosine + ATP = [glutamine synthetase]-O(4)-(5'-adenylyl)-L-tyrosine + diphosphate. In terms of biological role, involved in the regulation of glutamine synthetase GlnA, a key enzyme in the process to assimilate ammonia. When cellular nitrogen levels are high, the C-terminal adenylyl transferase (AT) inactivates GlnA by covalent transfer of an adenylyl group from ATP to specific tyrosine residue of GlnA, thus reducing its activity. Conversely, when nitrogen levels are low, the N-terminal adenylyl removase (AR) activates GlnA by removing the adenylyl group by phosphorolysis, increasing its activity. The regulatory region of GlnE binds the signal transduction protein PII (GlnB) which indicates the nitrogen status of the cell. This is Bifunctional glutamine synthetase adenylyltransferase/adenylyl-removing enzyme from Photobacterium profundum (strain SS9).